Consider the following 233-residue polypeptide: Large ribosomal subunit protein uL1 (233 aa).

It belongs to the universal ribosomal protein uL1 family. As to quaternary structure, part of the 50S ribosomal subunit.

Its function is as follows. Binds directly to 23S rRNA. The L1 stalk is quite mobile in the ribosome, and is involved in E site tRNA release. In terms of biological role, protein L1 is also a translational repressor protein, it controls the translation of the L11 operon by binding to its mRNA. This Geobacillus thermodenitrificans (strain NG80-2) protein is Large ribosomal subunit protein uL1.